The chain runs to 63 residues: Large ribosomal subunit protein bL28 (63 aa).

The protein belongs to the bacterial ribosomal protein bL28 family.

In Beutenbergia cavernae (strain ATCC BAA-8 / DSM 12333 / CCUG 43141 / JCM 11478 / NBRC 16432 / NCIMB 13614 / HKI 0122), this protein is Large ribosomal subunit protein bL28.